Consider the following 193-residue polypeptide: ATP synthase subunit b 2 (193 aa).

A helical membrane pass occupies residues 44–64 (IFWLVLTLLAIYFVLTKIALP).

The protein belongs to the ATPase B chain family. In terms of assembly, F-type ATPases have 2 components, F(1) - the catalytic core - and F(0) - the membrane proton channel. F(1) has five subunits: alpha(3), beta(3), gamma(1), delta(1), epsilon(1). F(0) has three main subunits: a(1), b(2) and c(10-14). The alpha and beta chains form an alternating ring which encloses part of the gamma chain. F(1) is attached to F(0) by a central stalk formed by the gamma and epsilon chains, while a peripheral stalk is formed by the delta and b chains.

The protein resides in the cell inner membrane. Functionally, f(1)F(0) ATP synthase produces ATP from ADP in the presence of a proton or sodium gradient. F-type ATPases consist of two structural domains, F(1) containing the extramembraneous catalytic core and F(0) containing the membrane proton channel, linked together by a central stalk and a peripheral stalk. During catalysis, ATP synthesis in the catalytic domain of F(1) is coupled via a rotary mechanism of the central stalk subunits to proton translocation. Its function is as follows. Component of the F(0) channel, it forms part of the peripheral stalk, linking F(1) to F(0). The b'-subunit is a diverged and duplicated form of b found in plants and photosynthetic bacteria. The sequence is that of ATP synthase subunit b 2 (atpF2) from Jannaschia sp. (strain CCS1).